The following is a 128-amino-acid chain: MAIPQIKTQVGTSKQAGDAAEESALRHLQQAGLRLLQRNYRTPGRGGGEIDLIMRAPDGTTVFVEVRQRANASHGGAAASISVTKQRRIIFAARHYLMRLREPPPCRFDVVTLECGVIQWLQAAFEAC.

The segment covering 1 to 15 has biased composition (polar residues); it reads MAIPQIKTQVGTSKQ. The disordered stretch occupies residues 1–20; that stretch reads MAIPQIKTQVGTSKQAGDAA.

Belongs to the UPF0102 family.

The protein is UPF0102 protein Rfer_3873 of Albidiferax ferrireducens (strain ATCC BAA-621 / DSM 15236 / T118) (Rhodoferax ferrireducens).